The primary structure comprises 1037 residues: Outer dynein arm-docking complex subunit 2 (1037 aa).

Composition is skewed to basic and acidic residues over residues 316-334 and 376-391; these read EEQQ…EDGH and SSIK…KLEK. Disordered regions lie at residues 316–353 and 376–439; these read EEQQ…FGKS and SSIK…ANAD. 10 ARM repeats span residues 477 to 516, 518 to 557, 528 to 570, 615 to 654, 656 to 695, 739 to 778, 821 to 860, 864 to 903, 905 to 944, and 946 to 985; these read ETCQ…EISH, PQIR…NVAK, GGLP…QHGG, HSNK…ECAS, ENYR…QCAE, KENV…ECCQ, PESM…PCIE, DAGE…NIAK, QENL…RCCM, and GRNR…QLSE. Position 545 is an N6-methyllysine (lysine 545).

Component of the outer dynein arm-docking complex along with ODAD1, ODAD3, and ODAD4. Interacts with CFAP61. Highly expressed in testis. In males, also detected at lower levels in lung, brain, liver and muscle. In females, detected in ovary.

It localises to the cytoplasm. Its subcellular location is the cytoskeleton. The protein localises to the cilium axoneme. It is found in the cilium basal body. Component of the outer dynein arm-docking complex (ODA-DC) that mediates outer dynein arms (ODA) binding onto the doublet microtubule. Involved in mediating assembly of both ODAs and their axonemal docking complex onto ciliary microtubules. The chain is Outer dynein arm-docking complex subunit 2 from Mus musculus (Mouse).